The chain runs to 140 residues: VapC ribonuclease Y4jK (140 aa).

A PINc domain is found at 2-135 (IVLDTNVISE…FEAAGLDIIN (134 aa)). The Mg(2+) site is built by aspartate 5 and aspartate 104.

Belongs to the PINc/VapC protein family. Mg(2+) serves as cofactor.

Toxic component of a type II toxin-antitoxin (TA) system. An RNase. Involved in plasmid stability. This Sinorhizobium fredii (strain NBRC 101917 / NGR234) protein is VapC ribonuclease Y4jK.